Consider the following 376-residue polypeptide: Carbapenem antibiotics biosynthesis protein CarD (376 aa).

The protein belongs to the proline oxidase family.

It functions in the pathway antibiotic biosynthesis; carbapenem biosynthesis. The protein is Carbapenem antibiotics biosynthesis protein CarD (carD) of Pectobacterium carotovorum subsp. carotovorum (Erwinia carotovora subsp. carotovora).